A 155-amino-acid polypeptide reads, in one-letter code: Cyanate hydratase (155 aa).

Residues R101, E104, and S127 contribute to the active site.

The protein belongs to the cyanase family.

The catalysed reaction is cyanate + hydrogencarbonate + 3 H(+) = NH4(+) + 2 CO2. Catalyzes the reaction of cyanate with bicarbonate to produce ammonia and carbon dioxide. The polypeptide is Cyanate hydratase (Coccidioides posadasii (strain C735) (Valley fever fungus)).